A 616-amino-acid chain; its full sequence is Dihydroxy-acid dehydratase (616 aa).

Residue Asp-81 participates in Mg(2+) binding. Cys-122 provides a ligand contact to [2Fe-2S] cluster. Positions 123 and 124 each coordinate Mg(2+). Lys-124 carries the post-translational modification N6-carboxylysine. Cys-195 serves as a coordination point for [2Fe-2S] cluster. Position 491 (Glu-491) interacts with Mg(2+). The Proton acceptor role is filled by Ser-517.

It belongs to the IlvD/Edd family. As to quaternary structure, homodimer. The cofactor is [2Fe-2S] cluster. It depends on Mg(2+) as a cofactor.

The catalysed reaction is (2R)-2,3-dihydroxy-3-methylbutanoate = 3-methyl-2-oxobutanoate + H2O. The enzyme catalyses (2R,3R)-2,3-dihydroxy-3-methylpentanoate = (S)-3-methyl-2-oxopentanoate + H2O. Its pathway is amino-acid biosynthesis; L-isoleucine biosynthesis; L-isoleucine from 2-oxobutanoate: step 3/4. The protein operates within amino-acid biosynthesis; L-valine biosynthesis; L-valine from pyruvate: step 3/4. Functionally, functions in the biosynthesis of branched-chain amino acids. Catalyzes the dehydration of (2R,3R)-2,3-dihydroxy-3-methylpentanoate (2,3-dihydroxy-3-methylvalerate) into 2-oxo-3-methylpentanoate (2-oxo-3-methylvalerate) and of (2R)-2,3-dihydroxy-3-methylbutanoate (2,3-dihydroxyisovalerate) into 2-oxo-3-methylbutanoate (2-oxoisovalerate), the penultimate precursor to L-isoleucine and L-valine, respectively. This chain is Dihydroxy-acid dehydratase, found in Methylocella silvestris (strain DSM 15510 / CIP 108128 / LMG 27833 / NCIMB 13906 / BL2).